We begin with the raw amino-acid sequence, 299 residues long: Zinc finger protein 414 (299 aa).

Polar residues-rich tracts occupy residues 1-20 (MEEL…SSSN) and 70-80 (SCQTSSTTRGV). The tract at residues 1–102 (MEELSGPSSD…PPPGKQIPCS (102 aa)) is disordered. 2 consecutive C2H2-type zinc fingers follow at residues 99–123 (IPCS…LRTH) and 135–159 (FRCS…GKLH). Residues 166–190 (FKCENCLLRFRTHRSLFKHLHVCID) form a C2H2-type 3; degenerate zinc finger. 2 disordered regions span residues 193–228 (QNPA…PFPL) and 254–299 (PRLR…GACR). Residues 203-215 (LDKEPPVPERPPE) are compositionally biased toward basic and acidic residues. The segment covering 217–228 (DPSSSLGLPFPL) has biased composition (low complexity). A compositionally biased stretch (polar residues) spans 268–285 (TSSTAIWKKSQGATSSPR).

The protein belongs to the krueppel C2H2-type zinc-finger protein family.

The protein localises to the nucleus. Its function is as follows. May be involved in transcriptional regulation. This is Zinc finger protein 414 (Znf414) from Rattus norvegicus (Rat).